Reading from the N-terminus, the 127-residue chain is Translation initiation factor 5A (127 aa).

Lys35 bears the Hypusine mark.

This sequence belongs to the eIF-5A family.

The protein localises to the cytoplasm. Its function is as follows. Functions by promoting the formation of the first peptide bond. The chain is Translation initiation factor 5A from Methanococcoides burtonii (strain DSM 6242 / NBRC 107633 / OCM 468 / ACE-M).